The following is a 624-amino-acid chain: LRR receptor kinase BAK1 (624 aa).

The signal sequence occupies residues 1-25; sequence MAAHRWAVWAVLLLRLLVPAARVLA. Residues 26-237 lie on the Extracellular side of the membrane; sequence NMEGDALHSL…QSPGSSSSTG (212 aa). 4 LRR repeats span residues 91–115, 117–139, 140–163, and 164–188; these read LKNL…LGNL, NLVS…LGNL, LKLR…LTAI, and TALQ…SFSL. Asparagine 103, asparagine 114, asparagine 127, asparagine 149, and asparagine 175 each carry an N-linked (GlcNAc...) asparagine glycan. The interval 205–236 is disordered; that stretch reads TTKPCPGAPPFSPPPPYNPPTPVQSPGSSSST. Over residues 210–227 the composition is skewed to pro residues; that stretch reads PGAPPFSPPPPYNPPTPV. A helical transmembrane segment spans residues 238–258; sequence AIAGGVAAGAALLFAIPAIGF. Over 259 to 624 the chain is Cytoplasmic; that stretch reads AWYRRRKPQE…LHAVELSGPR (366 aa). Positions 301–588 constitute a Protein kinase domain; the sequence is FSNKNILGRG…GLAERWEEWQ (288 aa). ATP-binding positions include 307 to 315 and lysine 329; that span reads LGRGGFGKV. The active-site Proton acceptor is aspartate 428.

It belongs to the protein kinase superfamily. Ser/Thr protein kinase family. In terms of assembly, forms homodimers. Interacts with BRI1. Interacts with REM4.1. Expressed in developing lateral roots, shoot apex, leaf blades, lamina joints and flowers. Expressed at low levels in leaf sheaths and panicles.

The protein resides in the cell membrane. The catalysed reaction is L-seryl-[protein] + ATP = O-phospho-L-seryl-[protein] + ADP + H(+). The enzyme catalyses L-threonyl-[protein] + ATP = O-phospho-L-threonyl-[protein] + ADP + H(+). Functionally, LRR receptor kinase involved in defense response. Does not seem to be required specifically for XA21-mediated immunity or basal resistance to Xanthomonas oryzae pv. oryzae (Xoo), or immunity to Magnaporthe oryzae. Involved in brassinosteroid (BR) signaling pathway. Acts as a coreceptor of BRI1. Forms at the plasma membrane a receptor complex with BRI1 which is activated in response to brassinolide. Phosphorylates BRI1. Required for normal plant growth and leaf development. Possesses kinase activity in vitro. The chain is LRR receptor kinase BAK1 from Oryza sativa subsp. japonica (Rice).